Here is a 318-residue protein sequence, read N- to C-terminus: Aspartate carbamoyltransferase catalytic subunit (318 aa).

The carbamoyl phosphate site is built by arginine 54 and threonine 55. Lysine 82 lines the L-aspartate pocket. Positions 104, 134, and 137 each coordinate carbamoyl phosphate. Arginine 174 and arginine 230 together coordinate L-aspartate. Glycine 271 and proline 272 together coordinate carbamoyl phosphate.

The protein belongs to the aspartate/ornithine carbamoyltransferase superfamily. ATCase family. In terms of assembly, heterododecamer (2C3:3R2) of six catalytic PyrB chains organized as two trimers (C3), and six regulatory PyrI chains organized as three dimers (R2).

The catalysed reaction is carbamoyl phosphate + L-aspartate = N-carbamoyl-L-aspartate + phosphate + H(+). Its pathway is pyrimidine metabolism; UMP biosynthesis via de novo pathway; (S)-dihydroorotate from bicarbonate: step 2/3. Catalyzes the condensation of carbamoyl phosphate and aspartate to form carbamoyl aspartate and inorganic phosphate, the committed step in the de novo pyrimidine nucleotide biosynthesis pathway. The chain is Aspartate carbamoyltransferase catalytic subunit from Clavibacter michiganensis subsp. michiganensis (strain NCPPB 382).